A 165-amino-acid chain; its full sequence is HTH-type transcriptional regulator IscR (165 aa).

Residues 2-131 enclose the HTH rrf2-type domain; that stretch reads RLTSKGRYAV…NNITLAELVN (130 aa). A DNA-binding region (H-T-H motif) is located at residues 28–51; it reads LADISERQGISLSYLEQLFSRLRK. [2Fe-2S] cluster contacts are provided by cysteine 92, cysteine 98, and cysteine 104.

It depends on [2Fe-2S] cluster as a cofactor.

Functionally, regulates the transcription of several operons and genes involved in the biogenesis of Fe-S clusters and Fe-S-containing proteins. The protein is HTH-type transcriptional regulator IscR of Erwinia tasmaniensis (strain DSM 17950 / CFBP 7177 / CIP 109463 / NCPPB 4357 / Et1/99).